We begin with the raw amino-acid sequence, 353 residues long: Quinolinate synthase (353 aa).

2 residues coordinate iminosuccinate: H49 and S70. C115 contributes to the [4Fe-4S] cluster binding site. Residues 141–143 and S158 contribute to the iminosuccinate site; that span reads YAN. C202 contacts [4Fe-4S] cluster. Residues 228–230 and T245 contribute to the iminosuccinate site; that span reads HPE. C299 contacts [4Fe-4S] cluster.

It belongs to the quinolinate synthase family. Type 1 subfamily. The cofactor is [4Fe-4S] cluster.

Its subcellular location is the cytoplasm. It carries out the reaction iminosuccinate + dihydroxyacetone phosphate = quinolinate + phosphate + 2 H2O + H(+). Its pathway is cofactor biosynthesis; NAD(+) biosynthesis; quinolinate from iminoaspartate: step 1/1. In terms of biological role, catalyzes the condensation of iminoaspartate with dihydroxyacetone phosphate to form quinolinate. In Hahella chejuensis (strain KCTC 2396), this protein is Quinolinate synthase.